Reading from the N-terminus, the 190-residue chain is GTP cyclohydrolase 1 (190 aa).

Zn(2+) contacts are provided by Cys-80, His-83, and Cys-151.

The protein belongs to the GTP cyclohydrolase I family. Toroid-shaped homodecamer, composed of two pentamers of five dimers.

It catalyses the reaction GTP + H2O = 7,8-dihydroneopterin 3'-triphosphate + formate + H(+). It functions in the pathway cofactor biosynthesis; 7,8-dihydroneopterin triphosphate biosynthesis; 7,8-dihydroneopterin triphosphate from GTP: step 1/1. The sequence is that of GTP cyclohydrolase 1 from Rickettsia felis (strain ATCC VR-1525 / URRWXCal2) (Rickettsia azadi).